We begin with the raw amino-acid sequence, 142 residues long: Hemoglobin subunit alpha-2 (142 aa).

The Globin domain maps to 2 to 142 (VLSAADKSNV…VSTVLTSKYR (141 aa)). His59 contacts O2. His88 contributes to the heme b binding site.

This sequence belongs to the globin family. Heterotetramer of two alpha chains and two beta chains.

In terms of biological role, involved in oxygen transport from the lung to the various peripheral tissues. Its function is as follows. Hemopressin acts as an antagonist peptide of the cannabinoid receptor CNR1. Hemopressin-binding efficiently blocks cannabinoid receptor CNR1 and subsequent signaling. The protein is Hemoglobin subunit alpha-2 (HBA2) of Capra hircus (Goat).